Here is a 347-residue protein sequence, read N- to C-terminus: Photosystem II protein D1 (347 aa).

The next 3 membrane-spanning stretches (helical) occupy residues 31–48 (YIGW…LAII), 120–135 (HFIG…EWEF), and 144–158 (WIYL…AATA). His120 contributes to the chlorophyll a binding site. Trp128 provides a ligand contact to pheophytin a. The [CaMn4O5] cluster site is built by Asp172 and Glu191. Residues 199–220 (FHILGVAGVFGGSLFSAMHGSL) traverse the membrane as a helical segment. His200 is a chlorophyll a binding site. Residues His217 and 266–267 (SF) contribute to the a quinone site. Position 217 (His217) interacts with Fe cation. His274 contributes to the Fe cation binding site. Residues 276-290 (FLAAWPVIGIWFTAL) traverse the membrane as a helical segment. His334, Glu335, and Asp344 together coordinate [CaMn4O5] cluster.

This sequence belongs to the reaction center PufL/M/PsbA/D family. PSII is composed of 1 copy each of membrane proteins PsbA, PsbB, PsbC, PsbD, PsbE, PsbF, PsbH, PsbI, PsbJ, PsbK, PsbL, PsbM, PsbT, PsbX, PsbY, PsbZ, Psb30/Ycf12, at least 3 peripheral proteins of the oxygen-evolving complex and a large number of cofactors. It forms dimeric complexes. The cofactor is The D1/D2 heterodimer binds P680, chlorophylls that are the primary electron donor of PSII, and subsequent electron acceptors. It shares a non-heme iron and each subunit binds pheophytin, quinone, additional chlorophylls, carotenoids and lipids. D1 provides most of the ligands for the Mn4-Ca-O5 cluster of the oxygen-evolving complex (OEC). There is also a Cl(-1) ion associated with D1 and D2, which is required for oxygen evolution. The PSII complex binds additional chlorophylls, carotenoids and specific lipids.. Post-translationally, tyr-163 forms a radical intermediate that is referred to as redox-active TyrZ, YZ or Y-Z.

Its subcellular location is the plastid. The protein localises to the chloroplast thylakoid membrane. It catalyses the reaction 2 a plastoquinone + 4 hnu + 2 H2O = 2 a plastoquinol + O2. In terms of biological role, photosystem II (PSII) is a light-driven water:plastoquinone oxidoreductase that uses light energy to abstract electrons from H(2)O, generating O(2) and a proton gradient subsequently used for ATP formation. It consists of a core antenna complex that captures photons, and an electron transfer chain that converts photonic excitation into a charge separation. The D1/D2 (PsbA/PsbD) reaction center heterodimer binds P680, the primary electron donor of PSII as well as several subsequent electron acceptors. This is Photosystem II protein D1 from Alexandrium tamarense (Red tide dinoflagellate).